A 442-amino-acid polypeptide reads, in one-letter code: D-serine dehydratase 1 (442 aa).

The residue at position 118 (Lys-118) is an N6-(pyridoxal phosphate)lysine.

This sequence belongs to the serine/threonine dehydratase family. DsdA subfamily. Monomer. The cofactor is pyridoxal 5'-phosphate.

The enzyme catalyses D-serine = pyruvate + NH4(+). The protein is D-serine dehydratase 1 of Escherichia coli (strain UTI89 / UPEC).